Reading from the N-terminus, the 119-residue chain is Beta-2-microglobulin (119 aa).

An N-terminal signal peptide occupies residues 1–20; it reads MARLVVVALLVLLCLSGLEA. In terms of domain architecture, Ig-like C1-type spans 25-114; that stretch reads PKIQVYSRHP…VTFTAPKTVK (90 aa). Cysteines 45 and 100 form a disulfide.

Belongs to the beta-2-microglobulin family. In terms of assembly, heterodimer of an alpha chain and a beta chain. Beta-2-microglobulin is the beta-chain of major histocompatibility complex class I molecules.

The protein resides in the secreted. Its function is as follows. Component of the class I major histocompatibility complex (MHC). Involved in the presentation of peptide antigens to the immune system. The protein is Beta-2-microglobulin (B2M) of Chiropotes satanas (Brown-bearded saki).